Here is a 151-residue protein sequence, read N- to C-terminus: 16.9 kDa class I heat shock protein 1 (151 aa).

Residues 37-151 (ETAAFANARV…PEVKAIEISG (115 aa)) form the sHSP domain.

The protein belongs to the small heat shock protein (HSP20) family. As to quaternary structure, may form oligomeric structures.

It localises to the cytoplasm. This Triticum aestivum (Wheat) protein is 16.9 kDa class I heat shock protein 1 (hsp16.9A).